We begin with the raw amino-acid sequence, 64 residues long: DNA gyrase inhibitor YacG (64 aa).

Zn(2+)-binding residues include cysteine 6, cysteine 9, cysteine 25, and cysteine 29.

It belongs to the DNA gyrase inhibitor YacG family. As to quaternary structure, interacts with GyrB. Zn(2+) serves as cofactor.

Its function is as follows. Inhibits all the catalytic activities of DNA gyrase by preventing its interaction with DNA. Acts by binding directly to the C-terminal domain of GyrB, which probably disrupts DNA binding by the gyrase. This Haemophilus influenzae (strain ATCC 51907 / DSM 11121 / KW20 / Rd) protein is DNA gyrase inhibitor YacG.